A 524-amino-acid chain; its full sequence is Probable myosin-binding protein 5 (524 aa).

The chain crosses the membrane as a helical span at residues Phe-20 to Leu-40. Residues Ser-299 to Arg-397 enclose the GTD-binding domain. Residues Ser-462–Gln-490 adopt a coiled-coil conformation.

Its subcellular location is the membrane. Functionally, probable membrane-anchored myosin receptors. This Arabidopsis thaliana (Mouse-ear cress) protein is Probable myosin-binding protein 5.